The primary structure comprises 628 residues: Cytoplasmic dynein 1 intermediate chain 1 (628 aa).

Composition is skewed to basic and acidic residues over residues 1–13 (MSDK…ELER) and 20–60 (QIRE…RETE). Residues 1-114 (MSDKSDLKAE…RTLQWDTDPS (114 aa)) form a disordered region. S2 is modified (N-acetylserine). A Phosphoserine modification is found at S50. The span at 70–79 (PEPPLVPTPM) shows a compositional bias: pro residues. Low complexity predominate over residues 80-90 (SPSSKSVSTPS). S83 carries the phosphoserine modification. Phosphothreonine is present on T88. Phosphoserine is present on residues S90, S94, and S97. The span at 105-114 (RTLQWDTDPS) shows a compositional bias: polar residues. Residues 130–146 (KLGVSKVTQVDFLPREV) form an interaction with DYNLT1 region. Residues 152 to 204 (ETQTPLATHQSEEDEEDEEMVEPKIGHDSELENQEKKQETKEAPPRELTEEEK) are disordered. T159 is modified (phosphothreonine). 2 positions are modified to phosphoserine: S162 and S180. Residues 172-204 (VEPKIGHDSELENQEKKQETKEAPPRELTEEEK) show a composition bias toward basic and acidic residues. 7 WD repeats span residues 268–317 (SKHR…TTPE), 321–361 (HCQS…RTPV), 370–411 (AHTH…TPQE), 420–460 (SKPV…AGIG), 465–510 (GHQG…PLYS), 513–553 (DNAD…EVPT), and 559–598 (EGAS…VPHN). S618 is subject to Phosphoserine.

It belongs to the dynein intermediate chain family. In terms of assembly, homodimer. The cytoplasmic dynein 1 complex consists of two catalytic heavy chains (HCs) and a number of non-catalytic subunits presented by intermediate chains (ICs), light intermediate chains (LICs) and light chains (LCs); the composition seems to vary in respect to the IC, LIC and LC composition. The heavy chain homodimer serves as a scaffold for the probable homodimeric assembly of the respective non-catalytic subunits. The ICs and LICs bind directly to the HC dimer and the LCs assemble on the IC dimer. Interacts with DYNC1H1. Interacts with DYNLT1 and DYNLT3. Interacts with DCTN1. Interacts with DYNLL2. Interacts with MCRS1; the interaction is required for the proper distribution of centriolar satellites.

The protein localises to the cytoplasm. It localises to the chromosome. The protein resides in the centromere. Its subcellular location is the kinetochore. It is found in the cytoskeleton. The protein localises to the spindle pole. Acts as one of several non-catalytic accessory components of the cytoplasmic dynein 1 complex that are thought to be involved in linking dynein to cargos and to adapter proteins that regulate dynein function. Cytoplasmic dynein 1 acts as a motor for the intracellular retrograde motility of vesicles and organelles along microtubules. The intermediate chains mediate the binding of dynein to dynactin via its 150 kDa component (p150-glued) DCTN1. May play a role in mediating the interaction of cytoplasmic dynein with membranous organelles and kinetochores. This chain is Cytoplasmic dynein 1 intermediate chain 1 (Dync1i1), found in Mus musculus (Mouse).